Here is a 252-residue protein sequence, read N- to C-terminus: uncharacterized protein (252 aa).

The protein resides in the plastid. The protein localises to the chloroplast. This is an uncharacterized protein from Guillardia theta (Cryptophyte).